A 648-amino-acid chain; its full sequence is Macrolide export ATP-binding/permease protein MacB (648 aa).

Residues Leu-5–Thr-243 form the ABC transporter domain. Gly-41–Ser-48 lines the ATP pocket. 5 consecutive transmembrane segments (helical) span residues Leu-273–Gly-293, Ala-417–Ala-437, Leu-523–Ile-543, Val-577–Met-597, and Leu-611–Leu-631.

This sequence belongs to the ABC transporter superfamily. Macrolide exporter (TC 3.A.1.122) family. Homodimer. Part of the tripartite efflux system MacAB-TolC, which is composed of an inner membrane transporter, MacB, a periplasmic membrane fusion protein, MacA, and an outer membrane component, TolC. The complex forms a large protein conduit and can translocate molecules across both the inner and outer membranes. Interacts with MacA.

Its subcellular location is the cell inner membrane. Its function is as follows. Part of the tripartite efflux system MacAB-TolC. MacB is a non-canonical ABC transporter that contains transmembrane domains (TMD), which form a pore in the inner membrane, and an ATP-binding domain (NBD), which is responsible for energy generation. Confers resistance against macrolides. The sequence is that of Macrolide export ATP-binding/permease protein MacB from Salmonella typhimurium (strain LT2 / SGSC1412 / ATCC 700720).